A 301-amino-acid chain; its full sequence is Aquaporin-10 (301 aa).

Over 1 to 22 (MVFTQAPAEIMGHLRIRSLLAR) the chain is Cytoplasmic. The helical transmembrane segment at 23-41 (QCLAEFLGVFVLMLLTQGA) threads the bilayer. Residues 42-55 (VAQAVTSGETKGNF) are Extracellular-facing. A helical membrane pass occupies residues 56 to 75 (FTMFLAGSLAVTIAIYVGGN). Topologically, residues 76 to 77 (VS) are cytoplasmic. An intramembrane region (discontinuously helical) is located at residues 78-90 (GAHLNPAFSLAMC). The NPA 1 signature appears at 82 to 84 (NPA). Residues 91–96 (IVGRLP) are Cytoplasmic-facing. A helical membrane pass occupies residues 97 to 121 (WVKLPIYILVQLLSAFCASGATYVL). The Extracellular segment spans residues 122–158 (YHDALQNYTGGNLTVTGPKETASIFATYPAPYLSLNN). Residues N128 and N133 are each glycosylated (N-linked (GlcNAc...) asparagine). Residues 159–176 (GFLDQVLGTGMLIVGLLA) traverse the membrane as a helical segment. Over 177–188 (ILDRRNKGVPAG) the chain is Cytoplasmic. Residues 189 to 205 (LEPVVVGMLILALGLSM) form a helical membrane-spanning segment. At 206 to 208 (GAN) the chain is on the extracellular side. The discontinuously helical intramembrane region spans 209–223 (CGIPLNPARDLGPRL). The NPA 2 signature appears at 214–216 (NPA). Over 224–241 (FTYVAGWGPEVFSAGNGW) the chain is Extracellular. Residues 242 to 262 (WWVPVVAPLVGATVGTATYQL) traverse the membrane as a helical segment. Topologically, residues 263–301 (LVALHHPEGPEPAQDLVSAQHKASELETPASAQMLECKL) are cytoplasmic.

Belongs to the MIP/aquaporin (TC 1.A.8) family. Homotetramer; each monomer provides an independent glycerol/water pore. In terms of processing, N-glycosylation at Asn-133 increases the stability of the protein but has no effect on its activity. In terms of tissue distribution, detected in epithelial cells on villi in the ileum, and also in stomach, jejunum, colon, rectum, white adipose tissue and placenta (at protein level). Expressed in duodenum and jejunum. Highest expression in absorptive epithelial cells at the tips of villi in the jejunum. Detected in subcutaneous adipose tissue.

It localises to the apical cell membrane. Its subcellular location is the cell membrane. The protein localises to the lipid droplet. It catalyses the reaction glycerol(in) = glycerol(out). The enzyme catalyses H2O(in) = H2O(out). The catalysed reaction is urea(in) = urea(out). Glycerol transport is regulated by pH, with the porin being permeable to glycerol at pH 5.5 but not at pH 7.4. Water permeability, however, is not influenced by pH. Its function is as follows. Aquaglyceroporins form homotetrameric transmembrane channels, with each monomer independently mediating glycerol and water transport across the plasma membrane along their osmotic gradient. Could also be permeable to urea. Among aquaglyceroporins, it exhibits a unique pH-gated glycerol transport activity, being more active at acidic pH. It most likely plays a central role in the efflux of glycerol formed during triglyceride hydrolysis in adipocytes and in glycerol uptake by enterocytes, as both processes occur and are stimulated at acidic pH. The polypeptide is Aquaporin-10 (Homo sapiens (Human)).